Consider the following 393-residue polypeptide: MASIGTPLTPTATRILLLGSGELGREVALEAMRLGVEVVAVDRYPNAPAMQVAHRSHVVSMLDGAALRAIIEAEKPYCIVPEIEAIATGTLLELEQEGYRVVPTARAARLTMDREGIRRLAAEELGLPTSPYRFASTEEEYRAAIETVGLPCVVKPVMSSSGKGQSLVRTPADIDSAWAYAQTGGRAGAGRVIVEGFVDFDYEITLLTVRHAGGVTFCDPIGHLQKDGDYRESWQPQPMDAVALEKARAMADAVTGALGGWGIFGVELFVRGDEVWFSEVSPRPHDTGLVTLISQNMSEFALHVRAILGLPVPLLRQNGPAASCVILAEGDSEAPRFHGVDAALAEQDTALCLFGKPEVHGRRRMGVALALGDDIDAARAKARRAAGSVTVEL.

Residues 22–23 (EL) and Glu-82 each bind N(1)-(5-phospho-beta-D-ribosyl)glycinamide. Residues Arg-114, Lys-155, 160 to 165 (SSGKGQ), 195 to 198 (EGFV), and Glu-203 each bind ATP. An ATP-grasp domain is found at 119–308 (RLAAEELGLP…EFALHVRAIL (190 aa)). Mg(2+) contacts are provided by Glu-267 and Glu-279. Residues Asp-286, Lys-356, and 363-364 (RR) each bind N(1)-(5-phospho-beta-D-ribosyl)glycinamide.

The protein belongs to the PurK/PurT family. Homodimer.

The enzyme catalyses N(1)-(5-phospho-beta-D-ribosyl)glycinamide + formate + ATP = N(2)-formyl-N(1)-(5-phospho-beta-D-ribosyl)glycinamide + ADP + phosphate + H(+). It functions in the pathway purine metabolism; IMP biosynthesis via de novo pathway; N(2)-formyl-N(1)-(5-phospho-D-ribosyl)glycinamide from N(1)-(5-phospho-D-ribosyl)glycinamide (formate route): step 1/1. Functionally, involved in the de novo purine biosynthesis. Catalyzes the transfer of formate to 5-phospho-ribosyl-glycinamide (GAR), producing 5-phospho-ribosyl-N-formylglycinamide (FGAR). Formate is provided by PurU via hydrolysis of 10-formyl-tetrahydrofolate. This Nitratidesulfovibrio vulgaris (strain ATCC 29579 / DSM 644 / CCUG 34227 / NCIMB 8303 / VKM B-1760 / Hildenborough) (Desulfovibrio vulgaris) protein is Formate-dependent phosphoribosylglycinamide formyltransferase.